The following is an 89-amino-acid chain: Small ribosomal subunit protein uS15 (89 aa).

This sequence belongs to the universal ribosomal protein uS15 family. In terms of assembly, part of the 30S ribosomal subunit. Forms a bridge to the 50S subunit in the 70S ribosome, contacting the 23S rRNA.

Functionally, one of the primary rRNA binding proteins, it binds directly to 16S rRNA where it helps nucleate assembly of the platform of the 30S subunit by binding and bridging several RNA helices of the 16S rRNA. Forms an intersubunit bridge (bridge B4) with the 23S rRNA of the 50S subunit in the ribosome. This Dechloromonas aromatica (strain RCB) protein is Small ribosomal subunit protein uS15.